Consider the following 508-residue polypeptide: Cytochrome P450 monooxygenase dmxR5 (508 aa).

The chain crosses the membrane as a helical span at residues 24 to 44 (LTLGLGAILVVLMSFLAFLSY). Asn-387 and Asn-405 each carry an N-linked (GlcNAc...) asparagine glycan. Cys-451 provides a ligand contact to heme. N-linked (GlcNAc...) asparagine glycosylation occurs at Asn-462. A disordered region spans residues 481–508 (EHKKSTQESGHGVPLPSKLSKFSPREEN).

This sequence belongs to the cytochrome P450 family. Heme is required as a cofactor.

It localises to the membrane. Its pathway is secondary metabolite biosynthesis. Functionally, cytochrome P450 monooxygenase; part of the gene cluster that mediates the biosynthesis of the dimeric xanthones cryptosporioptides. The pathway begins with the synthesis of atrochrysone thioester by the polyketide synthase dmx-nrPKS. The atrochrysone carboxyl ACP thioesterase dmxR1 then breaks the thioester bond and releases the atrochrysone carboxylic acid from dmx-nrPKS. Atrochrysone carboxylic acid is decarboxylated by the decarboxylase dmxR15, and oxidized by the anthrone oxygenase dmxR16 to yield emodin. Emodin is then reduced to emodin hydroquinone by the oxidoreductase dmxR7. A-ring reduction by the short chain dehydrogenase dmxR18, dehydration by the scytalone dehydratase-like protein dmxR17 and probable spontaneous re-oxidation, results in overall deoxygenation to chrysophanol. Baeyer-Villiger oxidation by the Baeyer-Villiger monooxygenase (BVMO) dmxR6 then yields monodictylactone in equilibrium with monodictyphenone. In the case of the cryptosporioptides biosynthesis, monodictylactone is reduced at C-12 to an alcohol (by the short chain dehydrogenases dmxR12 or dmxR8) and hydroxylated at C-5 by dmxR9, yielding the electron-rich aromatic which could eliminate H(2)O to form the ortho-quinonemethide, followed by tautomerisation to paraquinone and complete the formal reduction to produce the 10-methylgroup. Conjugate addition of C-4a-OH to the resulting paraquinone by the monooxygenase dmxR10 then gives cyclohexadienone, which is then reduced at C-5 by the short chain dehydrogenase dmxR3 to give the dihydroxanthone. The 6,7-epoxide in the cryptosporioptides could be introduced by the cytochrome P450 monooxygenase dmxL3. The highly reducing PKS dmxL2 manufactures butyrate, which is further carboxylated by dmxL1 to form ethylmalonate. It is not yet clear whether the carboxylation occurs while the butyrate is attached to the ACP of dmxL2, but this unusual fungal metabolite could then be esterified to O-5 by the O-acetyltransferase dmxR13. Finally, dimerization performed by dmxR5 gives the observed dimers cryptosporioptides A, B and C as the final products of the pathway. This is Cytochrome P450 monooxygenase dmxR5 from Cryptosporiopsis sp. (strain 8999).